An 802-amino-acid polypeptide reads, in one-letter code: Penicillin G acylase (802 aa).

The signal sequence occupies residues 1 to 26 (MKMKWLISVIILFVFIFPQNLVFAGE). Residue E177 coordinates Ca(2+). A propeptide spans 235–265 (SAVIKASEKVGKERENFVQSSEELGLPLKIG) (spacer peptide). S266 functions as the Nucleophile in the catalytic mechanism. D341 contacts Ca(2+).

It belongs to the peptidase S45 family. Heterodimer of an alpha subunit and a beta subunit processed from the same precursor. Ca(2+) serves as cofactor.

The protein resides in the secreted. The enzyme catalyses a penicillin + H2O = 6-aminopenicillanate + a carboxylate. This is Penicillin G acylase (pac) from Rhizobium viscosum (Arthrobacter viscosus).